Here is a 143-residue protein sequence, read N- to C-terminus: Transcriptional regulator SlyA (143 aa).

Residues 2–135 form the HTH marR-type domain; sequence ESTLGSDLAR…LANLIERLEQ (134 aa). A DNA-binding region (H-T-H motif) is located at residues 49-72; sequence QIQLAKAIGIEQPSLVRTLDQLED.

It belongs to the SlyA family. In terms of assembly, homodimer.

Transcription regulator that can specifically activate or repress expression of target genes. This Edwardsiella ictaluri (strain 93-146) protein is Transcriptional regulator SlyA.